Consider the following 642-residue polypeptide: Tigger transposable element-derived protein 5 (642 aa).

2 stretches are compositionally biased toward pro residues: residues 1–10 (MYPAGPPAGP) and 19–43 (LPGPPAPAPAPVPAARPPPPAPGPR). The segment at 1–45 (MYPAGPPAGPVPRRGRRPLPGPPAPAPAPVPAARPPPPAPGPRPR) is disordered. Residues 47-98 (AVKMAFRKAYSIKDKLQAIERVKGGERQASVCRDFGVPGGTLRGWLKDEPKL) enclose the HTH psq-type domain. DNA-binding regions (H-T-H motif) lie at residues 74 to 94 (QASVCRDFGVPGGTLRGWLKD) and 145 to 178 (PLIQAQAEAFARQIYGPECTFKASHGWFWRWQKR). An HTH CENPB-type domain is found at 112 to 185 (QRKKMRLANE…QKRHGISSQR (74 aa)). The interval 185 to 233 (RFYGEAGPPAPSPAPGPPVKEEPALPSGAGPLPDRAPAPPPPAEGGYGD) is disordered. Pro residues-rich tracts occupy residues 192–202 (PPAPSPAPGPP) and 218–227 (DRAPAPPPPA). 2 consecutive DDE-1 domains span residues 233–357 (DEQI…VLLV) and 410–477 (RAHI…ERCW). Positions 535–587 (LDDDGGPPEGCREEVGPALPPAAPPAPASLPSAMGGGEDEEEATDYGGTSVPT) are disordered. Residues 552–562 (ALPPAAPPAPA) are compositionally biased toward pro residues.

It belongs to the tigger transposable element derived protein family.

It localises to the nucleus. This is Tigger transposable element-derived protein 5 (TIGD5) from Homo sapiens (Human).